A 547-amino-acid chain; its full sequence is MHAMTFKAILLLGLLALVSTSASIAFAKEVRATITEVPPFNRNSFPSDFIFGTAASSYQYEGEGRVPSIWDNFTHQYPEKIADGSNGDVAVDQFHHYKEDVAIMKYMNLDAYRLSISWPRILPTGRASGGINSTGVDYYNRLINELLANDITPFVTIFHWDLPQALEDEYGGFLNHTIVNDFRDYADLCFNLFGDRVKHWITVNEPSIFTMNGYAYGIFAPGRCSPSYNPTCTGGDAGTEPDLVAHNLILSHAATVQVYKKKYQEHQNGIIGISLQIIWAVPLSNSTSDQKAAQRYLDFTGGWFLDPLTAGQYPESMQYLVGDRLPKFTTDEAKLVKGSFDFVGINYYTSSYLTSSDASTCCPPSYLTDSQVTFSSQRNGVFIGPVTPSGWMCIYPKGLRDLLLYIKEKYNNPLVYITENGMDELDDPSQSLEESLIDTYRIDSYYRHLFYVRSAIGSGANVKGFFAWSLLDNFEWNEGFTSRFGLNFVNYTTLTRYHKLSATWFKYFLARDQEIAKLDISAPKARWSSSTMIKEEKRKPKWAIQAF.

An N-terminal signal peptide occupies residues 1–31 (MHAMTFKAILLLGLLALVSTSASIAFAKEVR). Gln59 is an a beta-D-glucoside binding site. Asn72 and Asn132 each carry an N-linked (GlcNAc...) asparagine glycan. His159 is an a beta-D-glucoside binding site. N-linked (GlcNAc...) asparagine glycosylation is present at Asn175. Residue 204–205 (NE) participates in a beta-D-glucoside binding. The Proton donor role is filled by Glu205. Cys224 and Cys232 are joined by a disulfide. N-linked (GlcNAc...) asparagine glycosylation occurs at Asn285. Residues Tyr348, Glu419, Trp468, 475–476 (EW), and Phe484 each bind a beta-D-glucoside. The Nucleophile role is filled by Glu419. Asn490 is a glycosylation site (N-linked (GlcNAc...) asparagine).

The protein belongs to the glycosyl hydrolase 1 family. Homotetramer.

It catalyses the reaction 7-[beta-D-apiofuranosyl-(1-&gt;6)-beta-D-glucopyranosyloxy]isoflavonoid + H2O = a 7-hydroxyisoflavonoid + beta-D-apiofuranosyl-(1-&gt;6)-D-glucose.. Not inhibited by iron, calcium, mercury, manganese, zinc or EDTA. Functionally, hydrolyzes dalpatein 7-O-beta-D-apiofuranosyl-(1-&gt;6)-beta-D-glucopyranoside and dalnigrein 7-O-beta-D-apiofuranosyl-(1-&gt;6)-beta-D-glucopyranoside. Also has activity towards pNP-beta-D-fucoside and pNP-beta-D-glucoside, but not pNP-beta-cellobioside. The chain is Isoflavonoid 7-O-beta-apiosyl-glucoside beta-glycosidase from Dalbergia nigrescens (Thai blackwood).